The chain runs to 294 residues: MPATRIDGKAIAAKLREDVAAEVARLKRDHDLTPGLAVVLIGNDPASEVYVGSKTKQTVAAGMASFEHKLAADTPQAQVLALIARLNRDPAVHGILVQLPLPKGLDATIIVNAIDPAKDVDGLHPVNAGRLASGLPALTPCTPLGCIILAKTVHASLEGMNAIVLGRSNLVGRPLVQLLLNENATVTIAHSRTRNLPALCRQADLVFAAVGRPEMVKGDWIKPGATVIDVGINRLPGEGGKSRLVGDVAYAEAMEVAGAVTPVPGGVGQMTVACLLVNTVRAACAIKGLSAPSV.

Residues 166 to 168, Ser-191, and Ile-232 contribute to the NADP(+) site; that span reads GRS.

This sequence belongs to the tetrahydrofolate dehydrogenase/cyclohydrolase family. Homodimer.

The catalysed reaction is (6R)-5,10-methylene-5,6,7,8-tetrahydrofolate + NADP(+) = (6R)-5,10-methenyltetrahydrofolate + NADPH. The enzyme catalyses (6R)-5,10-methenyltetrahydrofolate + H2O = (6R)-10-formyltetrahydrofolate + H(+). It functions in the pathway one-carbon metabolism; tetrahydrofolate interconversion. In terms of biological role, catalyzes the oxidation of 5,10-methylenetetrahydrofolate to 5,10-methenyltetrahydrofolate and then the hydrolysis of 5,10-methenyltetrahydrofolate to 10-formyltetrahydrofolate. This chain is Bifunctional protein FolD, found in Afipia carboxidovorans (strain ATCC 49405 / DSM 1227 / KCTC 32145 / OM5) (Oligotropha carboxidovorans).